We begin with the raw amino-acid sequence, 269 residues long: Phosphatidylglycerophosphate phosphatase 1, chloroplastic (269 aa).

A chloroplast-targeting transit peptide spans 1 to 33 (MRSVPGPSPPCTRSLAHSCRAAARGPCGSARPR). The segment at 25–46 (GPCGSARPRARSVSARAHSSEA) is disordered. Positions 29–46 (SARPRARSVSARAHSSEA) are enriched in low complexity. The Phosphoryl acceptor signature appears at 103-107 (DKDNT).

It belongs to the HAD-like hydrolase superfamily.

It localises to the plastid. It is found in the chloroplast. It catalyses the reaction a 1,2-diacyl-sn-glycero-3-phospho-(1'-sn-glycero-3'-phosphate) + H2O = a 1,2-diacyl-sn-glycero-3-phospho-(1'-sn-glycerol) + phosphate. It functions in the pathway phospholipid metabolism; phosphatidylglycerol biosynthesis; phosphatidylglycerol from CDP-diacylglycerol: step 2/2. Phosphatidylglycerophosphate phosphatase involved in the biosynthesis of phosphatidylglycerol (PG), a phosphoglycerolipid predominantly present in chloroplastic thylakoid membranes and which has important photosynthetic function. Required for thylakoid membranes development and chloroplast function. The chain is Phosphatidylglycerophosphate phosphatase 1, chloroplastic from Chlamydomonas reinhardtii (Chlamydomonas smithii).